The chain runs to 96 residues: Large ribosomal subunit protein uL23 (96 aa).

Belongs to the universal ribosomal protein uL23 family. In terms of assembly, part of the 50S ribosomal subunit. Contacts protein L29, and trigger factor when it is bound to the ribosome.

Functionally, one of the early assembly proteins it binds 23S rRNA. One of the proteins that surrounds the polypeptide exit tunnel on the outside of the ribosome. Forms the main docking site for trigger factor binding to the ribosome. The protein is Large ribosomal subunit protein uL23 of Clostridioides difficile (strain 630) (Peptoclostridium difficile).